A 658-amino-acid chain; its full sequence is Carnitine O-palmitoyltransferase 2, mitochondrial (658 aa).

Residues 1–25 (MMPRLLFRAWPRCPSLVLGAPSRPL) constitute a mitochondrion transit peptide. Over 26–178 (SAVSGPDDYL…GLLEPEVFHL (153 aa)) the chain is Mitochondrial matrix. An N6-succinyllysine mark is found at Lys-69 and Lys-85. Positions 179-208 (NPSKSDTDAFKRLIRFVPPSLSWYGAYLVN) form an intramembrane region, note=Mitochondrial inner membrane. Residues 209 to 658 (AYPLDMSQYF…DALEGKAIKT (450 aa)) lie on the Mitochondrial matrix side of the membrane. Lys-239 is modified (N6-acetyllysine; alternate). The residue at position 239 (Lys-239) is an N6-succinyllysine; alternate. The residue at position 305 (Lys-305) is an N6-acetyllysine. His-372 acts as the Proton acceptor in catalysis. Residues Lys-424 and Lys-439 each carry the N6-succinyllysine modification. 452 to 464 (GKEFLKKKQLSPD) provides a ligand contact to CoA. (R)-carnitine-binding residues include Tyr-486, Ser-488, and Thr-499. 2 positions are modified to N6-acetyllysine; alternate: Lys-510 and Lys-544. Residues Lys-510 and Lys-544 each carry the N6-succinyllysine; alternate modification.

It belongs to the carnitine/choline acetyltransferase family.

The protein resides in the mitochondrion inner membrane. The enzyme catalyses (R)-carnitine + hexadecanoyl-CoA = O-hexadecanoyl-(R)-carnitine + CoA. It carries out the reaction octanoyl-CoA + (R)-carnitine = O-octanoyl-(R)-carnitine + CoA. The catalysed reaction is decanoyl-CoA + (R)-carnitine = O-decanoyl-(R)-carnitine + CoA. It catalyses the reaction dodecanoyl-CoA + (R)-carnitine = O-dodecanoyl-R-carnitine + CoA. The enzyme catalyses tetradecanoyl-CoA + (R)-carnitine = O-tetradecanoyl-(R)-carnitine + CoA. It carries out the reaction (R)-carnitine + octadecanoyl-CoA = O-octadecanoyl-(R)-carnitine + CoA. The catalysed reaction is eicosanoyl-CoA + (R)-carnitine = O-eicosanoyl-(R)-carnitine + CoA. It catalyses the reaction (9Z)-tetradecenoyl-CoA + (R)-carnitine = O-(9Z)-tetradecenoyl-(R)-carnitine + CoA. The enzyme catalyses (5Z)-tetradecenoyl-CoA + (R)-carnitine = O-(5Z)-tetradecenoyl-(R)-carnitine + CoA. It carries out the reaction (R)-carnitine + (9Z)-octadecenoyl-CoA = O-(9Z)-octadecenoyl-(R)-carnitine + CoA. The catalysed reaction is 4,8-dimethylnonanoyl-CoA + (R)-carnitine = O-4,8-dimethylnonanoyl-(R)-carnitine + CoA. Its pathway is lipid metabolism; fatty acid beta-oxidation. Involved in the intramitochondrial synthesis of acylcarnitines from accumulated acyl-CoA metabolites. Reconverts acylcarnitines back into the respective acyl-CoA esters that can then undergo beta-oxidation, an essential step for the mitochondrial uptake of long-chain fatty acids and their subsequent beta-oxidation in the mitochondrion. Active with medium (C8-C12) and long-chain (C14-C18) acyl-CoA esters. In Rattus norvegicus (Rat), this protein is Carnitine O-palmitoyltransferase 2, mitochondrial.